Here is a 112-residue protein sequence, read N- to C-terminus: DNA-binding protein TK1278 (112 aa).

It belongs to the PDCD5 family.

The protein is DNA-binding protein TK1278 of Thermococcus kodakarensis (strain ATCC BAA-918 / JCM 12380 / KOD1) (Pyrococcus kodakaraensis (strain KOD1)).